We begin with the raw amino-acid sequence, 230 residues long: MTALSETEHKGAFYGRRVGKTLRQGQQQALARTLPRYLIDLPTVAEPAALFPCPVDEIRLEIGFGGGEHLLSEAKRFPRAGYIGIEPFLNGMAKAVLELDLAPQENVRLFNLDAALLLARLPEGSVSQVELLYPDPWPKRRHWKRRFVRPDNLDLLARALKPGGVFRFASDVPDYVDWTLREVRAHPAFRWTQTRADDWRTPYEGWPGTRYEAKAIAAGRVPTYLSFARV.

S-adenosyl-L-methionine-binding residues include Glu-61, Glu-86, Asp-113, and Asp-135. The active site involves Asp-135. Substrate contacts are provided by residues Lys-139, Asp-171, and 209–212 (TRYE).

Belongs to the class I-like SAM-binding methyltransferase superfamily. TrmB family.

The catalysed reaction is guanosine(46) in tRNA + S-adenosyl-L-methionine = N(7)-methylguanosine(46) in tRNA + S-adenosyl-L-homocysteine. The protein operates within tRNA modification; N(7)-methylguanine-tRNA biosynthesis. Catalyzes the formation of N(7)-methylguanine at position 46 (m7G46) in tRNA. In Azorhizobium caulinodans (strain ATCC 43989 / DSM 5975 / JCM 20966 / LMG 6465 / NBRC 14845 / NCIMB 13405 / ORS 571), this protein is tRNA (guanine-N(7)-)-methyltransferase.